The following is a 604-amino-acid chain: MELRDSIRSFPTAPGVYLMRDATGTILYVGKARNLRQRVSNYFGATDGRPQVRFLMARVTSIEFTITDTEKEALLLENTLIKQHQPRYNLNLKDDKTFFSLRIDLTERFPRFTVVRKVSRDGARYFGPYASASAAREVLRQLQRMFPLRHYPLKTCLNRSRPCLYHQIGQCSAPCHNLITAEEYNLLVEGAVLFLEGKNKDLVSGFRQRMKEAAEGLHYEEAARWRDLLKAIDTTLEHQKMVSQGGDSDILGLAGNEDSLAIAVLFVRGGSLSGSTVLHGSGGLDTSDTLATFIQYYYGNERFIPDELLLPLSLDAGQSLEEWLSELKGKKVRLQQPKRGDKLNLVNLATRNAQAALAEKSATRQGIERTLAELQQKLALPRLPRRIECYDISTLQGRHSVGSGVAFLDGLPDKERYRRYRIRESQGQDDFGMLQEVFARRFSPERIEQWGLPDLVVVDGGIGQLNSTLSVLAELGLSERPAVVSLAKSRVKGDGKDIHVERTEERVFLPGRRNPVRLRQDSAPLKLLAAIRDEAHRFAIGYHRRLRDRETLRSALREIPGVGPKLERLLLTRFGSLEGIQNATVEELATVAGVSQELARLIKA.

Residues T12 to L90 form the GIY-YIG domain. The 36-residue stretch at K200 to T235 folds into the UVR domain.

The protein belongs to the UvrC family. In terms of assembly, interacts with UvrB in an incision complex.

It is found in the cytoplasm. In terms of biological role, the UvrABC repair system catalyzes the recognition and processing of DNA lesions. UvrC both incises the 5' and 3' sides of the lesion. The N-terminal half is responsible for the 3' incision and the C-terminal half is responsible for the 5' incision. In Trichlorobacter lovleyi (strain ATCC BAA-1151 / DSM 17278 / SZ) (Geobacter lovleyi), this protein is UvrABC system protein C.